Here is a 154-residue protein sequence, read N- to C-terminus: 6,7-dimethyl-8-ribityllumazine synthase (154 aa).

5-amino-6-(D-ribitylamino)uracil contacts are provided by residues Phe23, 57–59 (AFE), and 81–83 (AVI). A (2S)-2-hydroxy-3-oxobutyl phosphate-binding site is contributed by 86 to 87 (ST). His89 acts as the Proton donor in catalysis. A 5-amino-6-(D-ribitylamino)uracil-binding site is contributed by Phe114. A (2S)-2-hydroxy-3-oxobutyl phosphate-binding site is contributed by Arg128.

The protein belongs to the DMRL synthase family.

It carries out the reaction (2S)-2-hydroxy-3-oxobutyl phosphate + 5-amino-6-(D-ribitylamino)uracil = 6,7-dimethyl-8-(1-D-ribityl)lumazine + phosphate + 2 H2O + H(+). The protein operates within cofactor biosynthesis; riboflavin biosynthesis; riboflavin from 2-hydroxy-3-oxobutyl phosphate and 5-amino-6-(D-ribitylamino)uracil: step 1/2. Catalyzes the formation of 6,7-dimethyl-8-ribityllumazine by condensation of 5-amino-6-(D-ribitylamino)uracil with 3,4-dihydroxy-2-butanone 4-phosphate. This is the penultimate step in the biosynthesis of riboflavin. The protein is 6,7-dimethyl-8-ribityllumazine synthase of Campylobacter jejuni subsp. doylei (strain ATCC BAA-1458 / RM4099 / 269.97).